The primary structure comprises 254 residues: Thiazole synthase (254 aa).

Lys-93 (schiff-base intermediate with DXP) is an active-site residue. Residues Gly-154, 181-182, and 203-204 each bind 1-deoxy-D-xylulose 5-phosphate; these read AG and NT.

Belongs to the ThiG family. Homotetramer. Forms heterodimers with either ThiH or ThiS.

It localises to the cytoplasm. It catalyses the reaction [ThiS sulfur-carrier protein]-C-terminal-Gly-aminoethanethioate + 2-iminoacetate + 1-deoxy-D-xylulose 5-phosphate = [ThiS sulfur-carrier protein]-C-terminal Gly-Gly + 2-[(2R,5Z)-2-carboxy-4-methylthiazol-5(2H)-ylidene]ethyl phosphate + 2 H2O + H(+). It functions in the pathway cofactor biosynthesis; thiamine diphosphate biosynthesis. In terms of biological role, catalyzes the rearrangement of 1-deoxy-D-xylulose 5-phosphate (DXP) to produce the thiazole phosphate moiety of thiamine. Sulfur is provided by the thiocarboxylate moiety of the carrier protein ThiS. In vitro, sulfur can be provided by H(2)S. This chain is Thiazole synthase, found in Ruegeria pomeroyi (strain ATCC 700808 / DSM 15171 / DSS-3) (Silicibacter pomeroyi).